A 590-amino-acid polypeptide reads, in one-letter code: Aspartate--tRNA(Asp/Asn) ligase (590 aa).

E170 contacts L-aspartate. The aspartate stretch occupies residues 194–197; the sequence is QLFK. L-aspartate is bound at residue R216. Residues 216 to 218 and Q225 each bind ATP; that span reads RDE. H448 is an L-aspartate binding site. E482 contacts ATP. R489 contributes to the L-aspartate binding site. Residue 534 to 537 coordinates ATP; sequence GWDR. The tract at residues 557–590 is disordered; sequence SGGGADPLTGAPAPITPQQRRESGIDAKPKKDGE. Basic and acidic residues predominate over residues 575–590; it reads QRRESGIDAKPKKDGE.

This sequence belongs to the class-II aminoacyl-tRNA synthetase family. Type 1 subfamily. In terms of assembly, homodimer.

It is found in the cytoplasm. It catalyses the reaction tRNA(Asx) + L-aspartate + ATP = L-aspartyl-tRNA(Asx) + AMP + diphosphate. Functionally, aspartyl-tRNA synthetase with relaxed tRNA specificity since it is able to aspartylate not only its cognate tRNA(Asp) but also tRNA(Asn). Reaction proceeds in two steps: L-aspartate is first activated by ATP to form Asp-AMP and then transferred to the acceptor end of tRNA(Asp/Asn). The protein is Aspartate--tRNA(Asp/Asn) ligase of Mycobacterium sp. (strain JLS).